The following is a 265-amino-acid chain: Aquaporin-5 (265 aa).

The Cytoplasmic portion of the chain corresponds to 1–12 (MKKEVCSLAFFK). The helical transmembrane segment at 13-33 (AVFAEFLATLIFVFFGLGSAL) threads the bilayer. Residues 34–39 (KWPSAL) are Extracellular-facing. A helical transmembrane segment spans residues 40 to 60 (PTILQISIAFGLAIGTLAQAL). Over 61-65 (GPVSG) the chain is Cytoplasmic. Positions 66 to 74 (GHINPAITL) form an intramembrane region, discontinuously helical. Positions 69-71 (NPA) match the NPA 1 motif. The Cytoplasmic segment spans residues 75-87 (ALLIGNQISLLRA). A helical membrane pass occupies residues 88–108 (VFYVAAQLVGAIAGAGILYWL). Topologically, residues 109–126 (APLNARGNLAVNALNNNT) are extracellular. N124 carries an N-linked (GlcNAc...) asparagine glycan. Residues 127–147 (TPGKAMVVELILTFQLALCIF) traverse the membrane as a helical segment. The Cytoplasmic segment spans residues 148 to 158 (SSTDSRRTSPV). A helical membrane pass occupies residues 159–179 (GSPALSIGLSVTLGHLVGIYF). Residue T180 is a topological domain, extracellular. Positions 181 to 191 (GCSMNPARSFG) form an intramembrane region, discontinuously helical. The short motif at 185 to 187 (NPA) is the NPA 2 element. Over 192-203 (PAVVMNRFSPSH) the chain is Extracellular. A helical membrane pass occupies residues 204–224 (WVFWVGPIVGAMLAAILYFYL). At 225–265 (LFPSSLSLHDRVAVVKGTYEPEEDWEDHREERKKTIELTAH) the chain is on the cytoplasmic side.

The protein belongs to the MIP/aquaporin (TC 1.A.8) family. Homotetramer; each monomer provides an independent water pore. Interacts with TRPV4; the interaction is probably indirect and regulates TRPV4 activation by hypotonicity. Salivary glands, lacrimal glands, corneal epithelium in eye, trachea and lung.

The protein resides in the apical cell membrane. The protein localises to the cell membrane. Its subcellular location is the cytoplasmic vesicle membrane. It catalyses the reaction H2O(in) = H2O(out). Aquaporins form homotetrameric transmembrane channels, with each monomer independently mediating water transport across the plasma membrane along its osmotic gradient. Plays an important role in fluid secretion in salivary glands. Required for TRPV4 activation by hypotonicity. Together with TRPV4, controls regulatory volume decrease in salivary epithelial cells. Seems to play a redundant role in water transport in the eye, lung and in sweat glands. The protein is Aquaporin-5 of Rattus norvegicus (Rat).